A 242-amino-acid chain; its full sequence is Large ribosomal subunit protein uL1 (242 aa).

This sequence belongs to the universal ribosomal protein uL1 family. As to quaternary structure, part of the 50S ribosomal subunit.

Binds directly to 23S rRNA. The L1 stalk is quite mobile in the ribosome, and is involved in E site tRNA release. Functionally, protein L1 is also a translational repressor protein, it controls the translation of the L11 operon by binding to its mRNA. The protein is Large ribosomal subunit protein uL1 of Dictyoglomus turgidum (strain DSM 6724 / Z-1310).